Reading from the N-terminus, the 395-residue chain is Pyridinium-3,5-bisthiocarboxylic acid mononucleotide nickel insertion protein (395 aa).

This sequence belongs to the LarC family.

The enzyme catalyses Ni(II)-pyridinium-3,5-bisthiocarboxylate mononucleotide = pyridinium-3,5-bisthiocarboxylate mononucleotide + Ni(2+). In terms of biological role, involved in the biosynthesis of a nickel-pincer cofactor ((SCS)Ni(II) pincer complex). Binds Ni(2+), and functions in nickel delivery to pyridinium-3,5-bisthiocarboxylic acid mononucleotide (P2TMN), to form the mature cofactor. Is thus probably required for the activation of nickel-pincer cofactor-dependent enzymes. In Staphylococcus epidermidis (strain ATCC 35984 / DSM 28319 / BCRC 17069 / CCUG 31568 / BM 3577 / RP62A), this protein is Pyridinium-3,5-bisthiocarboxylic acid mononucleotide nickel insertion protein.